A 167-amino-acid chain; its full sequence is Crossover junction endodeoxyribonuclease RuvC (167 aa).

Catalysis depends on residues D8, E68, and D140. Mg(2+)-binding residues include D8, E68, and D140.

It belongs to the RuvC family. Homodimer which binds Holliday junction (HJ) DNA. The HJ becomes 2-fold symmetrical on binding to RuvC with unstacked arms; it has a different conformation from HJ DNA in complex with RuvA. In the full resolvosome a probable DNA-RuvA(4)-RuvB(12)-RuvC(2) complex forms which resolves the HJ. It depends on Mg(2+) as a cofactor.

Its subcellular location is the cytoplasm. The enzyme catalyses Endonucleolytic cleavage at a junction such as a reciprocal single-stranded crossover between two homologous DNA duplexes (Holliday junction).. Functionally, the RuvA-RuvB-RuvC complex processes Holliday junction (HJ) DNA during genetic recombination and DNA repair. Endonuclease that resolves HJ intermediates. Cleaves cruciform DNA by making single-stranded nicks across the HJ at symmetrical positions within the homologous arms, yielding a 5'-phosphate and a 3'-hydroxyl group; requires a central core of homology in the junction. The consensus cleavage sequence is 5'-(A/T)TT(C/G)-3'. Cleavage occurs on the 3'-side of the TT dinucleotide at the point of strand exchange. HJ branch migration catalyzed by RuvA-RuvB allows RuvC to scan DNA until it finds its consensus sequence, where it cleaves and resolves the cruciform DNA. The sequence is that of Crossover junction endodeoxyribonuclease RuvC from Sinorhizobium medicae (strain WSM419) (Ensifer medicae).